The primary structure comprises 392 residues: 1-deoxy-D-xylulose 5-phosphate reductoisomerase (392 aa).

6 residues coordinate NADPH: Thr10, Gly11, Ser12, Ile13, Asn38, and Asn124. Lys125 contacts 1-deoxy-D-xylulose 5-phosphate. Glu126 is an NADPH binding site. Residue Asp150 participates in Mn(2+) binding. Positions 151, 152, 176, and 199 each coordinate 1-deoxy-D-xylulose 5-phosphate. Position 152 (Glu152) interacts with Mn(2+). Gly205 provides a ligand contact to NADPH. 1-deoxy-D-xylulose 5-phosphate is bound by residues Ser212, Asn217, Lys218, and Glu221. Residue Glu221 coordinates Mn(2+).

It belongs to the DXR family. Mg(2+) is required as a cofactor. Mn(2+) serves as cofactor.

It carries out the reaction 2-C-methyl-D-erythritol 4-phosphate + NADP(+) = 1-deoxy-D-xylulose 5-phosphate + NADPH + H(+). Its pathway is isoprenoid biosynthesis; isopentenyl diphosphate biosynthesis via DXP pathway; isopentenyl diphosphate from 1-deoxy-D-xylulose 5-phosphate: step 1/6. Its function is as follows. Catalyzes the NADPH-dependent rearrangement and reduction of 1-deoxy-D-xylulose-5-phosphate (DXP) to 2-C-methyl-D-erythritol 4-phosphate (MEP). This Gloeobacter violaceus (strain ATCC 29082 / PCC 7421) protein is 1-deoxy-D-xylulose 5-phosphate reductoisomerase.